The following is a 282-amino-acid chain: Tumor necrosis factor ligand superfamily member 6 (282 aa).

At Met-1–Leu-82 the chain is on the cytoplasmic side. Residues Phe-30–Lys-73 form a disordered region. Over residues Arg-43 to Ser-71 the composition is skewed to pro residues. Residues Cys-83–Phe-103 form a helical; Signal-anchor for type II membrane protein membrane-spanning segment. Residues Gln-104–Leu-282 are Extracellular-facing. The span at Ala-119–Ile-132 shows a compositional bias: basic and acidic residues. The tract at residues Ala-119–Glu-140 is disordered. In terms of domain architecture, THD spans Lys-146–Leu-282. Asn-185 is a glycosylation site (N-linked (GlcNAc...) asparagine). A disulfide bridge links Cys-203 with Cys-234. Residues Asn-251 and Asn-261 are each glycosylated (N-linked (GlcNAc...) asparagine).

The protein belongs to the tumor necrosis factor family. Homotrimer. Interacts with ARHGAP9, BAIAP2L1, BTK, CACNB3, CACNB4, CRK, DLG2, DNMBP, DOCK4, EPS8L3, FGR, FYB1, FYN, HCK, ITK, ITSN2, KALRN, LYN, MACC1, MIA, MPP4, MYO15A, NCF1, NCK1, NCK2, NCKIPSD, OSTF1, PIK3R1, PSTPIP1, RIMBP3C, SAMSN1, SH3GL3, SH3PXD2B, SH3PXD2A, SH3RF2, SKAP2, SNX33, SNX9, SORBS3, SPTA1, SRC, SRGAP1, SRGAP2, SRGAP3, TEC, TJP3 and YES1. The soluble form derives from the membrane form by proteolytic processing. The membrane-bound form undergoes two successive intramembrane proteolytic cleavages. The first one is processed by ADAM10 producing an N-terminal fragment, which lacks the receptor-binding extracellular domain. This ADAM10-processed FasL (FasL APL) remnant form is still membrane anchored and further processed by SPPL2A that liberates the FasL intracellular domain (FasL ICD). FasL shedding by ADAM10 is a prerequisite for subsequent intramembrane cleavage by SPPL2A in T-cells. Post-translationally, phosphorylated by FGR on tyrosine residues; this is required for ubiquitination and subsequent internalization. In terms of processing, N-glycosylated. Glycosylation enhances apoptotic activity. Monoubiquitinated.

The protein localises to the cell membrane. The protein resides in the cytoplasmic vesicle lumen. It is found in the lysosome lumen. It localises to the secreted. Its subcellular location is the nucleus. In terms of biological role, cytokine that binds to TNFRSF6/FAS, a receptor that transduces the apoptotic signal into cells. Involved in cytotoxic T-cell-mediated apoptosis, natural killer cell-mediated apoptosis and in T-cell development. Initiates fratricidal/suicidal activation-induced cell death (AICD) in antigen-activated T-cells contributing to the termination of immune responses. TNFRSF6/FAS-mediated apoptosis also has a role in the induction of peripheral tolerance. Binds to TNFRSF6B/DcR3, a decoy receptor that blocks apoptosis. Its function is as follows. Induces FAS-mediated activation of NF-kappa-B, initiating non-apoptotic signaling pathways. Can induce apoptosis but does not appear to be essential for this process. Functionally, cytoplasmic form induces gene transcription inhibition. This chain is Tumor necrosis factor ligand superfamily member 6 (FASLG), found in Sus scrofa (Pig).